The primary structure comprises 260 residues: Methylesterase 7 (260 aa).

The Acyl-ester intermediate role is filled by S84. Residues D210 and H238 each act as charge relay system in the active site.

It belongs to the AB hydrolase superfamily. Methylesterase family.

The enzyme catalyses methyl (indol-3-yl)acetate + H2O = (indol-3-yl)acetate + methanol + H(+). It catalyses the reaction methyl salicylate + H2O = salicylate + methanol + H(+). Its pathway is plant hormone biosynthesis. With respect to regulation, esterase activity is down-regulated by salicylic acid (SA). In terms of biological role, methylesterase shown to have carboxylesterase activity, methyl indole-3-acetic acid (MeIAA) esterase activity and methyl salicylate (MeSA) esterase activity in vitro. Required to convert methyl salicylate (MeSA) to salicylic acid (SA) as part of the signal transduction pathways that activate systemic acquired resistance in systemic tissue. MeSA is believed to be an inactive form that needs to be demethylated to exert a biological effect. This is Methylesterase 7 from Arabidopsis thaliana (Mouse-ear cress).